We begin with the raw amino-acid sequence, 80 residues long: UPF0125 protein XF_2346 (80 aa).

This sequence belongs to the UPF0125 (RnfH) family.

The protein is UPF0125 protein XF_2346 of Xylella fastidiosa (strain 9a5c).